Reading from the N-terminus, the 528-residue chain is Tyrosine--tRNA ligase, cytoplasmic (528 aa).

An L-tyrosine-binding site is contributed by Tyr39. Positions 44–52 match the 'HIGH' region motif; that stretch reads TTGKPHVAY. Tyr166, Gln170, Asp173, and Gln188 together coordinate L-tyrosine. The 'KMSKS' region motif lies at 222–226; that stretch reads KMSSS. The Nuclear localization signal signature appears at 242 to 247; it reads KKKLKK. Residues 335 to 364 form a disordered region; the sequence is KLSNDAYPGASKQKTVPKGSTKNSGPEEID. Over residues 346–358 the composition is skewed to polar residues; the sequence is KQKTVPKGSTKNS. Residues 364 to 468 enclose the tRNA-binding domain; sequence DPSLLDLRVG…TGSAPGERIY (105 aa).

This sequence belongs to the class-I aminoacyl-tRNA synthetase family. Homodimer.

Its subcellular location is the cytoplasm. It localises to the nucleus. The enzyme catalyses tRNA(Tyr) + L-tyrosine + ATP = L-tyrosyl-tRNA(Tyr) + AMP + diphosphate + H(+). Its function is as follows. Catalyzes the attachment of tyrosine to tRNA(Tyr) in a two-step reaction: tyrosine is first activated by ATP to form Tyr-AMP and then transferred to the acceptor end of tRNA(Tyr). The sequence is that of Tyrosine--tRNA ligase, cytoplasmic (yars1) from Xenopus tropicalis (Western clawed frog).